Here is a 427-residue protein sequence, read N- to C-terminus: Light-independent protochlorophyllide reductase subunit N (427 aa).

Residues Cys28, Cys53, and Cys114 each coordinate [4Fe-4S] cluster.

The protein belongs to the BchN/ChlN family. As to quaternary structure, protochlorophyllide reductase is composed of three subunits; BchL, BchN and BchB. Forms a heterotetramer of two BchB and two BchN subunits. Requires [4Fe-4S] cluster as cofactor.

The catalysed reaction is chlorophyllide a + oxidized 2[4Fe-4S]-[ferredoxin] + 2 ADP + 2 phosphate = protochlorophyllide a + reduced 2[4Fe-4S]-[ferredoxin] + 2 ATP + 2 H2O. The protein operates within porphyrin-containing compound metabolism; bacteriochlorophyll biosynthesis (light-independent). Component of the dark-operative protochlorophyllide reductase (DPOR) that uses Mg-ATP and reduced ferredoxin to reduce ring D of protochlorophyllide (Pchlide) to form chlorophyllide a (Chlide). This reaction is light-independent. The NB-protein (BchN-BchB) is the catalytic component of the complex. The sequence is that of Light-independent protochlorophyllide reductase subunit N from Jannaschia sp. (strain CCS1).